We begin with the raw amino-acid sequence, 457 residues long: Putative HD domain-containing protein L394 (457 aa).

The HD domain maps to R65 to L206.

This chain is Putative HD domain-containing protein L394, found in Acanthamoeba polyphaga mimivirus (APMV).